Here is a 160-residue protein sequence, read N- to C-terminus: Large ribosomal subunit protein uL16 (160 aa).

The tract at residues 138 to 160 (INLSSDSSGEGKTGKDSKEEVKK) is disordered. Over residues 149–160 (KTGKDSKEEVKK) the composition is skewed to basic and acidic residues.

It belongs to the universal ribosomal protein uL16 family. Part of the 50S ribosomal subunit.

In terms of biological role, binds 23S rRNA and is also seen to make contacts with the A and possibly P site tRNAs. The protein is Large ribosomal subunit protein uL16 of Prochlorococcus marinus subsp. pastoris (strain CCMP1986 / NIES-2087 / MED4).